The primary structure comprises 168 residues: Cell division inhibitor SulA (168 aa).

Positions 106 to 112 (ALQTGNY) are ftsZ binding. Residues 161 to 168 (KIHSSLYH) are lon protease binding.

Belongs to the SulA family. In terms of assembly, interacts with FtsZ. Is rapidly cleaved and degraded by the Lon protease once DNA damage is repaired.

Component of the SOS system and an inhibitor of cell division. Accumulation of SulA causes rapid cessation of cell division and the appearance of long, non-septate filaments. In the presence of GTP, binds a polymerization-competent form of FtsZ in a 1:1 ratio, thus inhibiting FtsZ polymerization and therefore preventing it from participating in the assembly of the Z ring. This mechanism prevents the premature segregation of damaged DNA to daughter cells during cell division. The protein is Cell division inhibitor SulA of Serratia marcescens.